A 64-amino-acid chain; its full sequence is Ferredoxin-2 (64 aa).

2 4Fe-4S ferredoxin-type domains span residues 3 to 31 (KYLY…MSSA) and 34 to 64 (YAEV…WREE). Residues Cys12, Cys15, Cys18, and Cys54 each contribute to the [4Fe-4S] cluster site.

In terms of assembly, homodimer. Requires [4Fe-4S] cluster as cofactor.

Its function is as follows. Ferredoxins are iron-sulfur proteins that transfer electrons in a wide variety of metabolic reactions. The polypeptide is Ferredoxin-2 (Nitratidesulfovibrio vulgaris (strain DSM 19637 / Miyazaki F) (Desulfovibrio vulgaris)).